Consider the following 335-residue polypeptide: Ketol-acid reductoisomerase (NADP(+)) (335 aa).

A KARI N-terminal Rossmann domain is found at 2–182; it reads AKIIYDNETT…GATRAGVYET (181 aa). NADP(+)-binding positions include 25–28, Arg-48, Ser-51, Ser-53, and 83–86; these read YGSQ and DENQ. His-108 is a catalytic residue. Gly-134 is an NADP(+) binding site. Residues 183-328 form the KARI C-terminal knotted domain; it reads TFREETETDL…KQIRANIPWL (146 aa). Mg(2+)-binding residues include Asp-191, Glu-195, Glu-227, and Glu-231. Ser-252 serves as a coordination point for substrate.

It belongs to the ketol-acid reductoisomerase family. Mg(2+) serves as cofactor.

The catalysed reaction is (2R)-2,3-dihydroxy-3-methylbutanoate + NADP(+) = (2S)-2-acetolactate + NADPH + H(+). It catalyses the reaction (2R,3R)-2,3-dihydroxy-3-methylpentanoate + NADP(+) = (S)-2-ethyl-2-hydroxy-3-oxobutanoate + NADPH + H(+). It functions in the pathway amino-acid biosynthesis; L-isoleucine biosynthesis; L-isoleucine from 2-oxobutanoate: step 2/4. It participates in amino-acid biosynthesis; L-valine biosynthesis; L-valine from pyruvate: step 2/4. Involved in the biosynthesis of branched-chain amino acids (BCAA). Catalyzes an alkyl-migration followed by a ketol-acid reduction of (S)-2-acetolactate (S2AL) to yield (R)-2,3-dihydroxy-isovalerate. In the isomerase reaction, S2AL is rearranged via a Mg-dependent methyl migration to produce 3-hydroxy-3-methyl-2-ketobutyrate (HMKB). In the reductase reaction, this 2-ketoacid undergoes a metal-dependent reduction by NADPH to yield (R)-2,3-dihydroxy-isovalerate. This is Ketol-acid reductoisomerase (NADP(+)) from Methanosarcina barkeri (strain Fusaro / DSM 804).